Consider the following 353-residue polypeptide: Probable dual-specificity RNA methyltransferase RlmN (353 aa).

Glu104 (proton acceptor) is an active-site residue. One can recognise a Radical SAM core domain in the interval 112–341; sequence DGGRKTICIS…ILNRRSPGKD (230 aa). Cys119 and Cys346 form a disulfide bridge. [4Fe-4S] cluster contacts are provided by Cys126, Cys130, and Cys133. S-adenosyl-L-methionine is bound by residues 173 to 174, Ser205, 228 to 230, and Asn304; these read GE and SLN. Cys346 acts as the S-methylcysteine intermediate in catalysis.

It belongs to the radical SAM superfamily. RlmN family. It depends on [4Fe-4S] cluster as a cofactor.

The protein resides in the cytoplasm. The enzyme catalyses adenosine(2503) in 23S rRNA + 2 reduced [2Fe-2S]-[ferredoxin] + 2 S-adenosyl-L-methionine = 2-methyladenosine(2503) in 23S rRNA + 5'-deoxyadenosine + L-methionine + 2 oxidized [2Fe-2S]-[ferredoxin] + S-adenosyl-L-homocysteine. It catalyses the reaction adenosine(37) in tRNA + 2 reduced [2Fe-2S]-[ferredoxin] + 2 S-adenosyl-L-methionine = 2-methyladenosine(37) in tRNA + 5'-deoxyadenosine + L-methionine + 2 oxidized [2Fe-2S]-[ferredoxin] + S-adenosyl-L-homocysteine. Functionally, specifically methylates position 2 of adenine 2503 in 23S rRNA and position 2 of adenine 37 in tRNAs. This is Probable dual-specificity RNA methyltransferase RlmN from Leptospira interrogans serogroup Icterohaemorrhagiae serovar Lai (strain 56601).